A 126-amino-acid polypeptide reads, in one-letter code: Heavy metal-associated isoprenylated plant protein 14 (126 aa).

In terms of domain architecture, HMA spans 3 to 69 (AKNAVLQLSI…LCNTEIVSVD (67 aa)). C123 carries the post-translational modification Cysteine methyl ester. A lipid anchor (S-farnesyl cysteine) is attached at C123. Residues 124–126 (VIM) constitute a propeptide, removed in mature form.

This sequence belongs to the HIPP family.

Functionally, probable heavy-metal-binding protein. The polypeptide is Heavy metal-associated isoprenylated plant protein 14 (Arabidopsis thaliana (Mouse-ear cress)).